The sequence spans 256 residues: MKIITCYKCVPDEQDIAVNNADGSLDFSKADAKISQYDLNAIEAACQLKQQAAEAQVTALSVGGKALTNAKGRKDVLSRGPDELIVVIDDQFERALPQQTATALAAAAQKAGFDLILCGDGSSDLYAQQVGLLVGEILNIPAVNGVSKIISLTADTLTVERELEDETETLSIPLPAVVAVSTDINSPQIPSMKAILGAAKKPVQVWSAADIGFNAEAAWSEQQVAAPKQRERQRIVIEGDGEEQIAAFAENLRKVI.

Belongs to the ETF beta-subunit/FixA family. As to quaternary structure, heterodimer of FixA and FixB.

Its pathway is amine and polyamine metabolism; carnitine metabolism. Its function is as follows. Required for anaerobic carnitine reduction. May bring reductant to CaiA. The protein is Protein FixA of Escherichia coli O17:K52:H18 (strain UMN026 / ExPEC).